A 485-amino-acid chain; its full sequence is Aspartyl/glutamyl-tRNA(Asn/Gln) amidotransferase subunit B (485 aa).

The protein belongs to the GatB/GatE family. GatB subfamily. As to quaternary structure, heterotrimer of A, B and C subunits.

The enzyme catalyses L-glutamyl-tRNA(Gln) + L-glutamine + ATP + H2O = L-glutaminyl-tRNA(Gln) + L-glutamate + ADP + phosphate + H(+). It carries out the reaction L-aspartyl-tRNA(Asn) + L-glutamine + ATP + H2O = L-asparaginyl-tRNA(Asn) + L-glutamate + ADP + phosphate + 2 H(+). Allows the formation of correctly charged Asn-tRNA(Asn) or Gln-tRNA(Gln) through the transamidation of misacylated Asp-tRNA(Asn) or Glu-tRNA(Gln) in organisms which lack either or both of asparaginyl-tRNA or glutaminyl-tRNA synthetases. The reaction takes place in the presence of glutamine and ATP through an activated phospho-Asp-tRNA(Asn) or phospho-Glu-tRNA(Gln). This is Aspartyl/glutamyl-tRNA(Asn/Gln) amidotransferase subunit B from Cupriavidus pinatubonensis (strain JMP 134 / LMG 1197) (Cupriavidus necator (strain JMP 134)).